Consider the following 199-residue polypeptide: Insertion sequence IS21-like putative ATP-binding protein (199 aa).

114–121 lines the ATP pocket; sequence GDSGTGKT.

Belongs to the IS21/IS1162 putative ATP-binding protein family.

The chain is Insertion sequence IS21-like putative ATP-binding protein (tnpB) from Bacteroides fragilis (strain YCH46).